The chain runs to 389 residues: Indole-3-acetate monooxygenase (389 aa).

It belongs to the HpaH/HsaA monooxygenase family.

The catalysed reaction is (indol-3-yl)acetate + NADH + O2 + H(+) = 2-hydroxy-(1H-indol-3-yl)acetate + NAD(+) + H2O. It catalyses the reaction indole + NADH + O2 + H(+) = indoxyl + NAD(+) + H2O. In terms of biological role, involved in the degradation of the plant hormone indole-3-acetic acid (IAA). Catalyzes the first step of the pathway, the conversion of IAA to 2-hydroxy-IAA (2-OH-IAA). Can also convert indole to indoxyl, which spontaneously dimerizes in the presence of oxygen to form the blue pigment indigo. This is Indole-3-acetate monooxygenase from Acinetobacter baumannii (strain ATCC 19606 / DSM 30007 / JCM 6841 / CCUG 19606 / CIP 70.34 / NBRC 109757 / NCIMB 12457 / NCTC 12156 / 81).